The chain runs to 337 residues: Fructose-1,6-bisphosphatase class 1 (337 aa).

Mg(2+)-binding residues include glutamate 94, aspartate 116, leucine 118, and aspartate 119. Residues aspartate 119–serine 122, asparagine 210, and lysine 276 each bind substrate. Glutamate 282 serves as a coordination point for Mg(2+).

Belongs to the FBPase class 1 family. As to quaternary structure, homotetramer. Mg(2+) is required as a cofactor.

Its subcellular location is the cytoplasm. The enzyme catalyses beta-D-fructose 1,6-bisphosphate + H2O = beta-D-fructose 6-phosphate + phosphate. It participates in carbohydrate biosynthesis; gluconeogenesis. This chain is Fructose-1,6-bisphosphatase class 1, found in Burkholderia lata (strain ATCC 17760 / DSM 23089 / LMG 22485 / NCIMB 9086 / R18194 / 383).